A 357-amino-acid polypeptide reads, in one-letter code: Uroporphyrinogen decarboxylase (357 aa).

Residues 27–31 (RQAGR), D77, Y154, T209, and H327 contribute to the substrate site.

Belongs to the uroporphyrinogen decarboxylase family. In terms of assembly, homodimer.

It is found in the cytoplasm. It catalyses the reaction uroporphyrinogen III + 4 H(+) = coproporphyrinogen III + 4 CO2. It functions in the pathway porphyrin-containing compound metabolism; protoporphyrin-IX biosynthesis; coproporphyrinogen-III from 5-aminolevulinate: step 4/4. In terms of biological role, catalyzes the decarboxylation of four acetate groups of uroporphyrinogen-III to yield coproporphyrinogen-III. This is Uroporphyrinogen decarboxylase from Proteus mirabilis (strain HI4320).